The primary structure comprises 1274 residues: DENN domain-containing protein 5B (1274 aa).

An N-acetylserine modification is found at Ser-2. The region spanning 39–244 (DELAGENFDQ…EVPLPPPGRS (206 aa)) is the uDENN domain. Ser-49 and Ser-178 each carry phosphoserine. The cDENN domain occupies 263–399 (ELPLSDYPLR…VDFIQELSEV (137 aa)). Positions 401-581 (LQFGIPPEGS…DNKIMSQWEE (181 aa)) constitute a dDENN domain. The region spanning 772 to 932 (LEENTLIASL…DYFCFTSVFT (161 aa)) is the RUN 1 domain. Position 822 is a phosphoserine (Ser-822). The helical transmembrane segment at 916–936 (LLSLNAVDYFCFTSVFTTIMI) threads the bilayer. The region spanning 936–1044 (IPYRSVIIPI…DDGSLERILI (109 aa)) is the PLAT domain. Phosphothreonine is present on Thr-1062. Ser-1068, Ser-1076, and Ser-1079 each carry phosphoserine. The RUN 2 domain maps to 1118–1267 (TVLLCGENGL…QDFTIVLEGS (150 aa)).

The protein belongs to the RAB6IP1 family.

It localises to the membrane. Guanine nucleotide exchange factor (GEF) which may activate RAB39A and/or RAB39B. Promotes the exchange of GDP to GTP, converting inactive GDP-bound Rab proteins into their active GTP-bound form. The polypeptide is DENN domain-containing protein 5B (Dennd5b) (Mus musculus (Mouse)).